The chain runs to 330 residues: Ketol-acid reductoisomerase (NADP(+)) (330 aa).

A KARI N-terminal Rossmann domain is found at 3 to 184 (LPVYYDKDID…GGGRMGVLET (182 aa)). Residues 26-29 (YGAQ), Ser52, and Ser54 contribute to the NADP(+) site. His109 is an active-site residue. Gly135 provides a ligand contact to NADP(+). The KARI C-terminal knotted domain occupies 185-329 (SFKEECESDL…EILRAPFNHK (145 aa)). Residues Asp193, Glu197, Glu229, and Glu233 each contribute to the Mg(2+) site. Ser254 is a substrate binding site.

It belongs to the ketol-acid reductoisomerase family. The cofactor is Mg(2+).

The enzyme catalyses (2R)-2,3-dihydroxy-3-methylbutanoate + NADP(+) = (2S)-2-acetolactate + NADPH + H(+). The catalysed reaction is (2R,3R)-2,3-dihydroxy-3-methylpentanoate + NADP(+) = (S)-2-ethyl-2-hydroxy-3-oxobutanoate + NADPH + H(+). It participates in amino-acid biosynthesis; L-isoleucine biosynthesis; L-isoleucine from 2-oxobutanoate: step 2/4. It functions in the pathway amino-acid biosynthesis; L-valine biosynthesis; L-valine from pyruvate: step 2/4. Involved in the biosynthesis of branched-chain amino acids (BCAA). Catalyzes an alkyl-migration followed by a ketol-acid reduction of (S)-2-acetolactate (S2AL) to yield (R)-2,3-dihydroxy-isovalerate. In the isomerase reaction, S2AL is rearranged via a Mg-dependent methyl migration to produce 3-hydroxy-3-methyl-2-ketobutyrate (HMKB). In the reductase reaction, this 2-ketoacid undergoes a metal-dependent reduction by NADPH to yield (R)-2,3-dihydroxy-isovalerate. In Helicobacter pylori (strain ATCC 700392 / 26695) (Campylobacter pylori), this protein is Ketol-acid reductoisomerase (NADP(+)).